A 139-amino-acid polypeptide reads, in one-letter code: Holo-[acyl-carrier-protein] synthase (139 aa).

2 residues coordinate Mg(2+): Asp8 and Glu61.

It belongs to the P-Pant transferase superfamily. AcpS family. Requires Mg(2+) as cofactor.

The protein resides in the cytoplasm. It carries out the reaction apo-[ACP] + CoA = holo-[ACP] + adenosine 3',5'-bisphosphate + H(+). Its function is as follows. Transfers the 4'-phosphopantetheine moiety from coenzyme A to a Ser of acyl-carrier-protein. This is Holo-[acyl-carrier-protein] synthase from Rhodopseudomonas palustris (strain BisA53).